We begin with the raw amino-acid sequence, 232 residues long: Sugar fermentation stimulation protein homolog (232 aa).

Belongs to the SfsA family.

This Acidithiobacillus ferrooxidans (strain ATCC 23270 / DSM 14882 / CIP 104768 / NCIMB 8455) (Ferrobacillus ferrooxidans (strain ATCC 23270)) protein is Sugar fermentation stimulation protein homolog.